Reading from the N-terminus, the 381-residue chain is MRSKKLWISLLFALTLIFTMAFSNMSAQAAGKSSTEKKYIVGFKQTMSAMSSAKKKDVISEKGGKVQKQFKYVNAAAATLDEKAVKELKKDPSVAYVEEDHIAHEYAQSVPYGISQIKAPALHSQGYTGSNVKVAVIDSGIDSSHPDLNVRGGASFVPSETNPYQDGSSHGTHVAGTIAALNNSIGVLGVAPSASLYAVKVLDSTGSGQYSWIINGIEWAISNNMDVINMSLGGPTGSTALKTVVDKAVSSGIVVAAAAGNEGSSGSTSTVGYPAKYPSTIAVGAVNSSNQRASFSSAGSELDVMAPGVSIQSTLPGGTYGAYNGTSMATPHVAGAAALILSKHPTWTNAQVRDRLESTATYLGNSFYYGKGLINVQAAAQ.

Positions 1-29 (MRSKKLWISLLFALTLIFTMAFSNMSAQA) are cleaved as a signal peptide. Positions 30 to 106 (AGKSSTEKKY…VEEDHIAHEY (77 aa)) are excised as a propeptide. The Inhibitor I9 domain occupies 38–103 (KYIVGFKQTM…VAYVEEDHIA (66 aa)). Gln-108 contacts Ca(2+). Residues 111–380 (PYGISQIKAP…KGLINVQAAA (270 aa)) enclose the Peptidase S8 domain. Asp-138 (charge relay system) is an active-site residue. Residue Asp-147 participates in Ca(2+) binding. The Charge relay system role is filled by His-170. Ca(2+) contacts are provided by Leu-181, Asn-183, Ile-185, Val-187, Ala-275, Tyr-277, Thr-280, and Asp-303. Ser-327 (charge relay system) is an active-site residue.

Belongs to the peptidase S8 family. It depends on Ca(2+) as a cofactor.

The protein localises to the secreted. The enzyme catalyses Hydrolysis of proteins with broad specificity for peptide bonds, and a preference for a large uncharged residue in P1. Hydrolyzes peptide amides.. Its activity is regulated as follows. Inhibited by PMSF (phenylmethylsulphonyl fluoride) and 3,4-dichloroisocoumarin but not by EDTA (shown for strain RT-5). Its function is as follows. An extracellular alkaline serine protease, it catalyzes the hydrolysis of proteins and peptide amides. This chain is Subtilisin E, found in Bacillus subtilis (strain 168).